The primary structure comprises 93 residues: Large ribosomal subunit protein uL23 (93 aa).

It belongs to the universal ribosomal protein uL23 family. In terms of assembly, part of the 50S ribosomal subunit. Contacts protein L29, and trigger factor when it is bound to the ribosome.

In terms of biological role, one of the early assembly proteins it binds 23S rRNA. One of the proteins that surrounds the polypeptide exit tunnel on the outside of the ribosome. Forms the main docking site for trigger factor binding to the ribosome. This Campylobacter jejuni subsp. jejuni serotype O:6 (strain 81116 / NCTC 11828) protein is Large ribosomal subunit protein uL23.